We begin with the raw amino-acid sequence, 502 residues long: Cytochrome P450 71A1 (502 aa).

The chain crosses the membrane as a helical span at residues 7–21; sequence LLFLAIALTFFLLKL. Residue C443 coordinates heme.

It belongs to the cytochrome P450 family. Heme serves as cofactor. In terms of tissue distribution, mesocarp.

It localises to the microsome membrane. Its subcellular location is the endoplasmic reticulum membrane. Functionally, involved in the metabolism of compounds associated with the development of flavor in the ripening fruit process, possibly by acting as trans-cinnamic acid 4-hydrolase. In Persea americana (Avocado), this protein is Cytochrome P450 71A1 (CYP71A1).